The primary structure comprises 431 residues: E3 ubiquitin-protein ligase marc-3 (431 aa).

The RING-CH-type zinc-finger motif lies at 5 to 74 (NASLGPAVCR…EICKFAFKIK (70 aa)). Zn(2+) contacts are provided by cysteine 13, cysteine 16, cysteine 38, cysteine 40, histidine 48, cysteine 51, cysteine 64, and cysteine 67. The next 2 membrane-spanning stretches (helical) occupy residues 98-118 (PFID…GVFM) and 157-177 (LFLF…VSAL). 2 disordered regions span residues 267–289 (TSPD…FGRR) and 327–349 (SRAT…RDMR). The span at 273 to 282 (NTHHHDESRN) shows a compositional bias: basic and acidic residues.

The protein localises to the cell membrane. It localises to the endosome membrane. The enzyme catalyses S-ubiquitinyl-[E2 ubiquitin-conjugating enzyme]-L-cysteine + [acceptor protein]-L-lysine = [E2 ubiquitin-conjugating enzyme]-L-cysteine + N(6)-ubiquitinyl-[acceptor protein]-L-lysine.. It functions in the pathway protein modification; protein ubiquitination. Its function is as follows. E3 ubiquitin-protein ligase which positively regulates the fast polyspermy block during fertilization, preventing entry of more than one sperm into the oocyte. After fertilization, required in the zygote for the selective degradation of a subset of maternal membrane proteins including cav-1, chs-1 and rme-2, probably by mediating their K63-linked polyubiquitination. The chain is E3 ubiquitin-protein ligase marc-3 from Caenorhabditis elegans.